The following is a 420-amino-acid chain: uncharacterized protein (420 aa).

This is an uncharacterized protein from Pseudanabaena tenuis (strain PCC 7409).